Here is a 1083-residue protein sequence, read N- to C-terminus: Rho GTPase-activating protein 39 (1083 aa).

The residue at position 2 (S2) is an N-acetylserine. 2 WW domains span residues 25–58 and 63–97; these read NTRLEWVEIIEPRTRERMYANLVTGECVWDPPAG and RTSENQWWELFDPNTSRFYYYNASTQRTVWHRPQG. The interval 110–154 is disordered; it reads KQNTESPRASAESSPGRGSSVSREGSTSSSLEPEPDTEKAQELPA. Residues 117–141 show a composition bias toward low complexity; sequence RASAESSPGRGSSVSREGSTSSSLE. The residue at position 169 (S169) is a Phosphoserine. The disordered stretch occupies residues 226 to 369; sequence AAQGNGYAPD…NKQGPPSPCQ (144 aa). A compositionally biased stretch (polar residues) spans 245–256; sequence PSGSQHSPSLQT. Residues 268–280 are compositionally biased toward basic and acidic residues; the sequence is PERRPSPFLKRAE. A phosphoserine mark is found at S286, S384, S388, S406, and S407. Disordered stretches follow at residues 405 to 545 and 570 to 599; these read GSSP…EAEG and MKQRSSWDSQQDGSGYESDGALPLPMPGPV. Composition is skewed to polar residues over residues 474–488 and 573–582; these read SWSSQQDTLSSTGYS and RSSWDSQQDG. A phosphoserine mark is found at S604, S690, S715, and S726. The region spanning 722 to 879 is the MyTH4 domain; sequence WSSESIKKPM…PNVEEIRHAK (158 aa). The 189-residue stretch at 890 to 1078 folds into the Rho-GAP domain; the sequence is SALQEVMGMQ…VLIQHLDTSF (189 aa).

It is found in the nucleus. In Homo sapiens (Human), this protein is Rho GTPase-activating protein 39 (ARHGAP39).